A 564-amino-acid chain; its full sequence is 4-hydroxy-7-methoxy-3-oxo-3,4-dihydro-2H-1,4-benzoxazin-2-yl glucoside beta-D-glucosidase 1d, chloroplastic (564 aa).

Residues Met-1–Ala-50 constitute a chloroplast transit peptide. A beta-D-glucoside is bound by residues Gln-92, His-194, and Asn-239–Glu-240. Glu-240 (proton donor) is an active-site residue. Cysteines 259 and 265 form a disulfide. Residues Tyr-383, Glu-456, Trp-504, Glu-511 to Trp-512, and Phe-520 each bind a beta-D-glucoside. The active-site Nucleophile is the Glu-456.

Belongs to the glycosyl hydrolase 1 family. As to quaternary structure, homo- and heterohexamers. In terms of tissue distribution, expressed in young seedlings early after germination.

It localises to the plastid. The protein resides in the chloroplast. The enzyme catalyses Hydrolysis of terminal, non-reducing beta-D-glucosyl residues with release of beta-D-glucose.. The catalysed reaction is DIMBOA beta-D-glucoside + H2O = DIMBOA + D-glucose. It carries out the reaction DIBOA beta-D-glucoside + H2O = DIBOA + D-glucose. In terms of biological role, acts in defense of young plant parts against pests via the production of hydroxamic acids from hydroxamic acid glucosides. Enzymatic activity is highly correlated with plant growth. The preferred substrate is DIMBOA-beta-D-glucoside. The protein is 4-hydroxy-7-methoxy-3-oxo-3,4-dihydro-2H-1,4-benzoxazin-2-yl glucoside beta-D-glucosidase 1d, chloroplastic (GLU1D) of Triticum aestivum (Wheat).